Reading from the N-terminus, the 1069-residue chain is Leucine--tRNA ligase (1069 aa).

Residues 19 to 53 (TAEHGTGAANATASPSGAVPPSGATATAGTGDEPG) form a disordered region. The 'HIGH' region motif lies at 107-118 (PYPSGTGLHVGH). Positions 823–836 (GRFTHHGAPVDRRS) are enriched in basic and acidic residues. The disordered stretch occupies residues 823–846 (GRFTHHGAPVDRRSGKMGKSLKNS). Positions 838–842 (KMGKS) match the 'KMSKS' region motif. Position 841 (Lys-841) interacts with ATP.

It belongs to the class-I aminoacyl-tRNA synthetase family.

The protein localises to the cytoplasm. The enzyme catalyses tRNA(Leu) + L-leucine + ATP = L-leucyl-tRNA(Leu) + AMP + diphosphate. This chain is Leucine--tRNA ligase, found in Frankia alni (strain DSM 45986 / CECT 9034 / ACN14a).